The following is a 506-amino-acid chain: Serine/threonine-protein kinase D6PKL1 (506 aa).

The segment at 1-96 (MASKYGSGVL…TCSSFSGNNK (96 aa)) is disordered. The span at 12–23 (ENKKEKGDKETP) shows a compositional bias: basic and acidic residues. Positions 24 to 54 (ETSYSSQSVSVNTLADQVSSTLSFAPSSDSK) are enriched in polar residues. Over residues 55–67 (TGGEVKFNEKSDQ) the composition is skewed to basic and acidic residues. Over residues 77–92 (STSSDISDESTCSSFS) the composition is skewed to low complexity. The region spanning 123–456 (FRLLKRLGCG…ATEMKQHPFF (334 aa)) is the Protein kinase domain. ATP contacts are provided by residues 129–137 (LGCGDIGTV) and Lys152. Catalysis depends on Asp248, which acts as the Proton acceptor. The disordered stretch occupies residues 475-495 (PVDYESAPATPAAATSTSVKS). Residues 480-492 (SAPATPAAATSTS) are compositionally biased toward low complexity.

The protein belongs to the protein kinase superfamily. AGC Ser/Thr protein kinase family.

Its subcellular location is the cell membrane. The enzyme catalyses L-seryl-[protein] + ATP = O-phospho-L-seryl-[protein] + ADP + H(+). The catalysed reaction is L-threonyl-[protein] + ATP = O-phospho-L-threonyl-[protein] + ADP + H(+). Its function is as follows. Protein kinase that regulates the auxin transport activity of PIN auxin efflux facilitators by direct phosphorylation. D6PK-mediated PIN phosphorylation promotes auxin transport in the hypocotyl and this is a prerequisite for PHOT1-dependent hypocotyl bending. The chain is Serine/threonine-protein kinase D6PKL1 (D6PKL1) from Arabidopsis thaliana (Mouse-ear cress).